The primary structure comprises 1074 residues: Phospholipase D1 (1074 aa).

Residues 81-212 (IKAQVLEVER…TEFLDISQLS (132 aa)) enclose the PX domain. The PH domain maps to 219–328 (PKGIEGMIMK…WGGAIEEFIQ (110 aa)). Residues C240 and C241 are each lipidated (S-palmitoyl cysteine). The region spanning 459–486 (YLWAHHEKLVIIDQSVAFVGGIDLAYGR) is the PLD phosphodiesterase 1 domain. The segment at 463-928 (HHEKLVIIDQ…MLGKRDSEMA (466 aa)) is catalytic. A phosphoserine mark is found at S499, S561, and S629. Residues 891–918 (ELIYVHSKLLIADDNTVIIGSANINDRS) enclose the PLD phosphodiesterase 2 domain.

It belongs to the phospholipase D family. As to quaternary structure, interacts with PIP5K1B. Expressed abundantly in the pancreas and heart and at high levels in brain, placenta, spleen, uterus and small intestine.

Its subcellular location is the cytoplasm. The protein resides in the perinuclear region. The protein localises to the endoplasmic reticulum membrane. It localises to the golgi apparatus membrane. It is found in the late endosome membrane. It catalyses the reaction a 1,2-diacyl-sn-glycero-3-phosphocholine + H2O = a 1,2-diacyl-sn-glycero-3-phosphate + choline + H(+). The catalysed reaction is ethanol + a 1,2-diacyl-sn-glycero-3-phosphocholine = 1,2-diacyl-sn-glycero-3-phosphoethanol + choline. It carries out the reaction 1,2-dihexadecanoyl-sn-glycero-3-phosphocholine + H2O = 1,2-dihexadecanoyl-sn-glycero-3-phosphate + choline + H(+). Stimulated by phosphatidylinositol 4,5-bisphosphate and phosphatidylinositol 3,4,5-trisphosphate, activated by the phosphokinase C-alpha, by the ADP-ribosylation factor-1 (ARF-1), and to a lesser extent by GTP-binding proteins: RHO A, RAC-1 and CDC42. Inhibited by oleate. Its function is as follows. Function as phospholipase selective for phosphatidylcholine. Implicated as a critical step in numerous cellular pathways, including signal transduction, membrane trafficking, and the regulation of mitosis. May be involved in the regulation of perinuclear intravesicular membrane traffic. In Homo sapiens (Human), this protein is Phospholipase D1.